Here is a 180-residue protein sequence, read N- to C-terminus: Putative 5'(3')-deoxyribonucleotidase (180 aa).

The Nucleophile role is filled by Asp-9. Positions 9, 11, and 135 each coordinate Mg(2+). Asp-11 (proton donor) is an active-site residue.

The protein belongs to the 5'(3')-deoxyribonucleotidase family. Mg(2+) serves as cofactor.

Dephosphorylates the 5' and 2'(3')-phosphates of deoxyribonucleotides. The polypeptide is Putative 5'(3')-deoxyribonucleotidase (Staphylococcus aureus (strain Mu50 / ATCC 700699)).